We begin with the raw amino-acid sequence, 175 residues long: 19.0 kDa class II heat shock protein (175 aa).

The region spanning 42-165 (DRRAMANTPM…KPRVVEVKVA (124 aa)) is the sHSP domain. Residues 145–175 (TVDKKPPPEPKKPRVVEVKVAGAGEPKGKGK) form a disordered region. The segment covering 146–161 (VDKKPPPEPKKPRVVE) has biased composition (basic and acidic residues).

It belongs to the small heat shock protein (HSP20) family. May form oligomeric structures.

The protein localises to the cytoplasm. This is 19.0 kDa class II heat shock protein (HSP19.0) from Oryza sativa subsp. japonica (Rice).